Here is a 358-residue protein sequence, read N- to C-terminus: 3'(2'),5'-bisphosphate nucleotidase 2 (358 aa).

Asp-54 serves as the catalytic Proton acceptor. Positions 77, 141, 143, and 144 each coordinate Mg(2+). Catalysis depends on Thr-146, which acts as the Proton acceptor. Adenosine 3',5'-bisphosphate-binding residues include Thr-146, His-243, Ser-272, Lys-275, Arg-289, and Asp-302. Residues His-243, Ser-272, Lys-275, Arg-289, and Asp-302 each contribute to the AMP site. Residue Asp-302 participates in Mg(2+) binding.

The protein belongs to the inositol monophosphatase superfamily. Mg(2+) is required as a cofactor.

The enzyme catalyses 3'-phosphoadenylyl sulfate + H2O = adenosine 5'-phosphosulfate + phosphate. The catalysed reaction is adenosine 3',5'-bisphosphate + H2O = AMP + phosphate. It carries out the reaction adenosine 2',5'-bisphosphate + H2O = AMP + phosphate. In terms of biological role, phosphatase that converts adenosine 3'-phosphate 5'-phosphosulfate (PAPS) to adenosine 5'-phosphosulfate (APS) and 3'(2')-phosphoadenosine 5'-phosphate (PAP) to AMP. Regulates the flux of sulfur in the sulfur-activation pathway by converting PAPS to APS. Involved in salt tolerance. This Candida albicans (strain SC5314 / ATCC MYA-2876) (Yeast) protein is 3'(2'),5'-bisphosphate nucleotidase 2 (HAL22).